Consider the following 266-residue polypeptide: MKNPHLNSPCKILNTVSGDKKMKRKAREPIKHVSEDHYPYFKLYKNPHLMAETLGDGSPQETHRSEIITSRDDSVRNDVLNTAVDMRINTITAAEVPDSKLRSVSEKTVNSKIVQASPQVSVLSAPQVFPLERVVLSQRAASQAPAGGSERAESPRKRAGEPSGVVTEIKAIQQTRRLLANARERTRVHTISAAFEALRKQVPCYSYGQKLSKLAILRIACNYILSLAQLADLDYTPDHRNMSFRECVEQCTRTLQAEGRSKKRKE.

A disordered region spans residues 140 to 164; the sequence is AASQAPAGGSERAESPRKRAGEPSG. Basic and acidic residues predominate over residues 150–160; the sequence is ERAESPRKRAG. The interval 175–188 is basic motif; degenerate; the sequence is TRRLLANARERTRV. The bHLH domain maps to 175–227; the sequence is TRRLLANARERTRVHTISAAFEALRKQVPCYSYGQKLSKLAILRIACNYILSL. A helix-loop-helix motif region spans residues 189–227; it reads HTISAAFEALRKQVPCYSYGQKLSKLAILRIACNYILSL.

The protein resides in the nucleus. It localises to the nucleus speckle. The protein localises to the cytoplasm. Functionally, transcription factor that binds a palindromic (canonical) core consensus DNA sequence 5'-CANNTG- 3' known as an E-box element, possibly as a heterodimer with other bHLH proteins. During development, is required for heart looping and swim bladder formation by acting in concert with GATA4 and ZFPM1. During the development of both the retina and skeletal muscles is required for neural retinal cell through modulating PAX6 and NEUROG3 expression and myogenic differentiation. In Danio rerio (Zebrafish), this protein is Transcription factor atoh8.